Reading from the N-terminus, the 705-residue chain is Translation initiation factor IF-2 (705 aa).

Positions 40–124 (DDQIKALDKK…QPAAPKEIPS (85 aa)) are disordered. The span at 41–58 (DQIKALDKKFKKEQKNDN) shows a compositional bias: basic and acidic residues. Residues 59-77 (KQSTQNNHQKSNNQNQNKG) are compositionally biased toward low complexity. The span at 94–108 (KGNKKNNRNNKKNNK) shows a compositional bias: basic residues. The 170-residue stretch at 207–376 (ERPAVVTIMG…GLVAEVQELK (170 aa)) folds into the tr-type G domain. The segment at 216–223 (GHVDHGKT) is G1. 216-223 (GHVDHGKT) is a binding site for GTP. Positions 241–245 (GITQH) are G2. A G3 region spans residues 262 to 265 (DTPG). GTP-binding positions include 262-266 (DTPGH) and 316-319 (NKID). Residues 316-319 (NKID) form a G4 region. The G5 stretch occupies residues 352–354 (SAL).

Belongs to the TRAFAC class translation factor GTPase superfamily. Classic translation factor GTPase family. IF-2 subfamily.

Its subcellular location is the cytoplasm. Its function is as follows. One of the essential components for the initiation of protein synthesis. Protects formylmethionyl-tRNA from spontaneous hydrolysis and promotes its binding to the 30S ribosomal subunits. Also involved in the hydrolysis of GTP during the formation of the 70S ribosomal complex. The chain is Translation initiation factor IF-2 from Staphylococcus aureus (strain Mu3 / ATCC 700698).